We begin with the raw amino-acid sequence, 186 residues long: Photosystem I assembly protein Ycf4 (186 aa).

The next 2 membrane-spanning stretches (helical) occupy residues tryptophan 26 to phenylalanine 46 and isoleucine 66 to isoleucine 86.

Belongs to the Ycf4 family.

It localises to the plastid. It is found in the chloroplast thylakoid membrane. Functionally, seems to be required for the assembly of the photosystem I complex. This Pyropia yezoensis (Susabi-nori) protein is Photosystem I assembly protein Ycf4.